A 142-amino-acid chain; its full sequence is Large-conductance mechanosensitive channel (142 aa).

2 consecutive transmembrane segments (helical) span residues 14-34 (VVDLAVAVIIGAAFGKIVSSL) and 86-106 (FGQFITVAVNFLLIAFVVFLV).

It belongs to the MscL family. Homopentamer.

It is found in the cell inner membrane. In terms of biological role, channel that opens in response to stretch forces in the membrane lipid bilayer. May participate in the regulation of osmotic pressure changes within the cell. This is Large-conductance mechanosensitive channel from Rhizorhabdus wittichii (strain DSM 6014 / CCUG 31198 / JCM 15750 / NBRC 105917 / EY 4224 / RW1) (Sphingomonas wittichii).